The primary structure comprises 157 residues: Large ribosomal subunit protein eL24 (157 aa).

Residues 95–157 (NQKPEVRKAQ…VSAPRVGGKR (63 aa)) form a disordered region. A compositionally biased stretch (basic and acidic residues) spans 96-117 (QKPEVRKAQREQAIRAAKEAKK). The segment covering 123–145 (KKQTTQSSKAPAKSAQKQKIAKP) has biased composition (low complexity).

The protein belongs to the eukaryotic ribosomal protein eL24 family. In terms of assembly, component of the large ribosomal subunit.

It localises to the cytoplasm. In terms of biological role, component of the large ribosomal subunit. The ribosome is a large ribonucleoprotein complex responsible for the synthesis of proteins in the cell. Plays an essential role in early embryonic development. This Danio rerio (Zebrafish) protein is Large ribosomal subunit protein eL24 (rpl24).